The primary structure comprises 31 residues: Photosystem I reaction center subunit XII (31 aa).

Residues 7-26 (QVFLALIIALIPGILADRLG) form a helical membrane-spanning segment.

The protein belongs to the PsaM family.

The protein localises to the plastid. It localises to the chloroplast thylakoid membrane. The polypeptide is Photosystem I reaction center subunit XII (Euglena deses).